The sequence spans 181 residues: MKFLFDYFPIICFFVAYKFWGIYIATAAAMVVSALQVAIYWIRFRRFEKFHVITLIFILLLGSFTLVFHNAIFIKWKPTIVYWIFAIVLFGSHFFGKHTLVHRMLKEKIELPAKTWSRLNLSWALFFLILGVLNLFVVYNFDTNTWVNFKLFGTLVLTLVFILGQAFYIARHAQNLKMNSR.

Helical transmembrane passes span 8–28 (FPII…ATAA), 53–73 (ITLI…NAIF), 76–96 (WKPT…HFFG), 121–141 (LSWA…VYNF), and 149–169 (FKLF…AFYI).

This sequence belongs to the YciB family.

Its subcellular location is the cell inner membrane. Plays a role in cell envelope biogenesis, maintenance of cell envelope integrity and membrane homeostasis. The polypeptide is Inner membrane-spanning protein YciB (Coxiella burnetii (strain RSA 331 / Henzerling II)).